Consider the following 27-residue polypeptide: Chitinase 47 kDa (27 aa).

Residues 3–27 (SKVVGYFTEWGTYDRKYYVKNIEXS) enclose the GH18 domain.

This sequence belongs to the glycosyl hydrolase 18 family. Chitinase class II subfamily. Homodimer.

The catalysed reaction is Random endo-hydrolysis of N-acetyl-beta-D-glucosaminide (1-&gt;4)-beta-linkages in chitin and chitodextrins.. Able to cleave chitin oligomers from N=3 to 6. The sequence is that of Chitinase 47 kDa from Streptomyces olivaceoviridis (Streptomyces corchorusii).